The primary structure comprises 320 residues: ATP-dependent 6-phosphofructokinase isozyme 1 (320 aa).

ATP is bound at residue Gly12. Residues 22 to 26 (RGVVR) and 55 to 60 (RYSVSD) each bind ADP. ATP contacts are provided by residues 73 to 74 (RF) and 103 to 106 (GDGS). Asp104 serves as a coordination point for Mg(2+). Position 126–128 (126–128 (TID)) interacts with substrate. The active-site Proton acceptor is Asp128. Arg155 is an ADP binding site. Substrate-binding positions include Arg163 and 170–172 (MGR). Residues 186–188 (GCE), Lys212, and 214–216 (KKH) each bind ADP. Residues Glu223, Arg244, and 250–253 (HIQR) each bind substrate.

Belongs to the phosphofructokinase type A (PFKA) family. ATP-dependent PFK group I subfamily. Prokaryotic clade 'B1' sub-subfamily. Homotetramer. Mg(2+) serves as cofactor.

Its subcellular location is the cytoplasm. The enzyme catalyses beta-D-fructose 6-phosphate + ATP = beta-D-fructose 1,6-bisphosphate + ADP + H(+). It participates in carbohydrate degradation; glycolysis; D-glyceraldehyde 3-phosphate and glycerone phosphate from D-glucose: step 3/4. With respect to regulation, allosterically activated by ADP and other diphosphonucleosides, and allosterically inhibited by phosphoenolpyruvate. Its function is as follows. Catalyzes the phosphorylation of D-fructose 6-phosphate to fructose 1,6-bisphosphate by ATP, the first committing step of glycolysis. The chain is ATP-dependent 6-phosphofructokinase isozyme 1 from Escherichia coli O6:H1 (strain CFT073 / ATCC 700928 / UPEC).